A 686-amino-acid polypeptide reads, in one-letter code: Putative pentatricopeptide repeat-containing protein At3g49142 (686 aa).

PPR repeat units lie at residues 73-103, 104-138, 139-173, 174-204, 205-239, 240-272, 273-307, 308-342, 343-373, 374-408, 409-439, and 445-475; these read NSSLGVKLMRAYASLKDVASARKVFDEIPER, NVIIINVMIRSYVNNGFYGEGVKVFGTMCGCNVRP, DHYTFPCVLKACSCSGTIVIGRKIHGSATKVGLSS, TLFVGNGLVSMYGKCGFLSEARLVLDEMSRR, DVVSWNSLVVGYAQNQRFDDALEVCREMESVKISH, DAGTMASLLPAVSNTTTENVMYVKDMFFKMGKK, SLVSWNVMIGVYMKNAMPVEAVELYSRMEADGFEP, DAVSITSVLPACGDTSALSLGKKIHGYIERKKLIP, NLLLENALIDMYAKCGCLEKARDVFENMKSR, DVVSWTAMISAYGFSGRGCDAVALFSKLQDSGLVP, DSIAFVTTLAACSHAGLLEEGRSCFKLMTDH, and RLEHLACMVDLLGRAGKVKEAYRFIQDMSME. Positions 480-555 are type E motif; the sequence is VWGALLGACR…NPGASNVEVN (76 aa). The segment at 556–586 is type E(+) motif; it reads RIIHTFLVGDRSHPQSDEIYRELDVLVKKMK. Residues 587 to 686 are type DYW motif; that stretch reads ELGYVPDSES…FGVCSCGDYW (100 aa).

This sequence belongs to the PPR family. PCMP-H subfamily.

In Arabidopsis thaliana (Mouse-ear cress), this protein is Putative pentatricopeptide repeat-containing protein At3g49142 (PCMP-H77).